Consider the following 190-residue polypeptide: Xanthine phosphoribosyltransferase (190 aa).

Leucine 20 and asparagine 27 together coordinate xanthine. 129–133 contacts 5-phospho-alpha-D-ribose 1-diphosphate; it reads ANGAA. Xanthine is bound at residue lysine 157.

Belongs to the purine/pyrimidine phosphoribosyltransferase family. Xpt subfamily. Homodimer.

It localises to the cytoplasm. It catalyses the reaction XMP + diphosphate = xanthine + 5-phospho-alpha-D-ribose 1-diphosphate. It participates in purine metabolism; XMP biosynthesis via salvage pathway; XMP from xanthine: step 1/1. Functionally, converts the preformed base xanthine, a product of nucleic acid breakdown, to xanthosine 5'-monophosphate (XMP), so it can be reused for RNA or DNA synthesis. The protein is Xanthine phosphoribosyltransferase of Laribacter hongkongensis (strain HLHK9).